The chain runs to 1186 residues: Pumilio homolog 1 (1186 aa).

Position 2 is an N-acetylserine (Ser2). Ser19 carries the post-translational modification Phosphoserine. The tract at residues 22-73 is disordered; it reads LKHHPQEPANPNMPVVLTSGTGSQAQPQPAANQALAAGTHSSPVPGSIGVAG. Positions 45 to 58 are enriched in low complexity; sequence QAQPQPAANQALAA. Phosphoserine occurs at positions 75, 98, and 106. A Phosphothreonine modification is found at Thr112. Ser124, Ser159, Ser197, Ser209, and Ser229 each carry phosphoserine. Positions 233–272 are disordered; it reads SCLRKGGFGPRDADSDENDKGEKKNKGTFDGDKLGDLKEE. The span at 250 to 272 shows a compositional bias: basic and acidic residues; the sequence is NDKGEKKNKGTFDGDKLGDLKEE. A Phosphoserine modification is found at Ser305. A compositionally biased stretch (low complexity) spans 485-502; sequence TNSANQQTTPQAQQGQQQ. Disordered regions lie at residues 485–524 and 613–648; these read TNSANQQTTPQAQQGQQQVLRGGASQRPLTPNQNQQGQQT and AGTTNGPFRPLGTQQPQPQPQQQPNNNLASSSFYGN. Over residues 511-524 the composition is skewed to polar residues; the sequence is RPLTPNQNQQGQQT. The residue at position 514 (Thr514) is a Phosphothreonine. The span at 626-639 shows a compositional bias: low complexity; the sequence is QQPQPQPQQQPNNN. 2 positions are modified to phosphoserine: Ser709 and Ser714. The interval 742 to 775 is disordered; the sequence is GPVGMPLPSQGPGHSQTPPPSLSSHGSSSSLNLG. Low complexity predominate over residues 763–775; sequence LSSHGSSSSLNLG. At Arg796 the chain carries Omega-N-methylarginine. 2 positions are modified to phosphoserine: Ser806 and Ser822. Residues 828-1168 enclose the PUM-HD domain; it reads GRSRLLEDFR…HILAKLEKYY (341 aa). Pumilio repeat units lie at residues 848–883, 884–919, 920–955, 956–991, 992–1027, 1028–1063, 1064–1099, and 1103–1142; these read EIAGHIMEFSQDQHGSRFIQLKLERATPAERQLVFN, EILQAAYQLMVDVFGNYVIQKFFEFGSLEQKLALAE, RIRGHVLSLALQMYGCRVIQKALEFIPSDQQNEMVR, ELDGHVLKCVKDQNGNHVVQKCIECVQPQSLQFIID, AFKGQVFALSTHPYGCRVIQRILEHCLPDQTLPILE, ELHQHTEQLVQDQYGNYVIQHVLEHGRPEDKSKIVA, EIRGNVLVLSQHKFASNVVEKCVTHASRTERAVLID, and TMNDGPHSALYTMMKDQYANYVVQKMIDVAEPGQRKIVMH. The tract at residues 863 to 867 is adenine-nucleotide binding in RNA target; the sequence is SRFIQ. The tract at residues 899-903 is uracil-nucleotide binding in RNA target; the sequence is NYVIQ. The interval 935 to 939 is adenine-nucleotide binding in RNA target; sequence CRVIQ. Residues 971–975 are non-specific-nucleotide binding in RNA target; it reads NHVVQ. The interval 1007-1011 is adenine-nucleotide binding in RNA target; that stretch reads CRVIQ. A uracil-nucleotide binding in RNA target region spans residues 1043-1047; it reads NYVIQ. 2 guanine-nucleotide binding in RNA target regions span residues 1079–1083 and 1080–1083; these read SNVVE and NVVE. Residues 1122–1126 are uracil-nucleotide binding in RNA target; the sequence is NYVVQ.

Recruits the CCR4-POP2-NOT deadenylase leading to translational inhibition and mRNA degradation. Interacts with TRIM71 (via NHL repeats) in an RNA-dependent manner. Post-translationally, phosphorylation at Ser-714 promotes RNA-binding activity. Following growth factor stimulation phosphorylated at Ser-714, promoting binding to the 3'-UTR of CDKN1B/p27 mRNA.

It is found in the cytoplasm. It localises to the P-body. Its subcellular location is the cytoplasmic granule. Its function is as follows. Sequence-specific RNA-binding protein that acts as a post-transcriptional repressor by binding the 3'-UTR of mRNA targets. Binds to an RNA consensus sequence, the Pumilio Response Element (PRE), 5'-UGUANAUA-3', that is related to the Nanos Response Element (NRE). Mediates post-transcriptional repression of transcripts via different mechanisms: acts via direct recruitment of the CCR4-POP2-NOT deadenylase leading to translational inhibition and mRNA degradation. Also mediates deadenylation-independent repression by promoting accessibility of miRNAs. Following growth factor stimulation, phosphorylated and binds to the 3'-UTR of CDKN1B/p27 mRNA, inducing a local conformational change that exposes miRNA-binding sites, promoting association of miR-221 and miR-222, efficient suppression of CDKN1B/p27 expression, and rapid entry to the cell cycle. Acts as a post-transcriptional repressor of E2F3 mRNAs by binding to its 3'-UTR and facilitating miRNA regulation. Represses a program of genes necessary to maintain genomic stability such as key mitotic, DNA repair and DNA replication factors. Its ability to repress those target mRNAs is regulated by the lncRNA NORAD (non-coding RNA activated by DNA damage) which, due to its high abundance and multitude of PUMILIO binding sites, is able to sequester a significant fraction of PUM1 and PUM2 in the cytoplasm. Involved in neuronal functions by regulating ATXN1 mRNA levels: acts by binding to the 3'-UTR of ATXN1 transcripts, leading to their down-regulation independently of the miRNA machinery. Plays a role in cytoplasmic sensing of viral infection. In testis, acts as a post-transcriptional regulator of spermatogenesis by binding to the 3'-UTR of mRNAs coding for regulators of p53/TP53. Involved in embryonic stem cell renewal by facilitating the exit from the ground state: acts by targeting mRNAs coding for naive pluripotency transcription factors and accelerates their down-regulation at the onset of differentiation. Binds specifically to miRNA MIR199A precursor, with PUM2, regulates miRNA MIR199A expression at a postranscriptional level. This is Pumilio homolog 1 (PUM1) from Pongo abelii (Sumatran orangutan).